Here is a 158-residue protein sequence, read N- to C-terminus: SsrA-binding protein (158 aa).

It belongs to the SmpB family.

Its subcellular location is the cytoplasm. In terms of biological role, required for rescue of stalled ribosomes mediated by trans-translation. Binds to transfer-messenger RNA (tmRNA), required for stable association of tmRNA with ribosomes. tmRNA and SmpB together mimic tRNA shape, replacing the anticodon stem-loop with SmpB. tmRNA is encoded by the ssrA gene; the 2 termini fold to resemble tRNA(Ala) and it encodes a 'tag peptide', a short internal open reading frame. During trans-translation Ala-aminoacylated tmRNA acts like a tRNA, entering the A-site of stalled ribosomes, displacing the stalled mRNA. The ribosome then switches to translate the ORF on the tmRNA; the nascent peptide is terminated with the 'tag peptide' encoded by the tmRNA and targeted for degradation. The ribosome is freed to recommence translation, which seems to be the essential function of trans-translation. The sequence is that of SsrA-binding protein from Bartonella henselae (strain ATCC 49882 / DSM 28221 / CCUG 30454 / Houston 1) (Rochalimaea henselae).